The following is a 592-amino-acid chain: Serine/threonine-protein kinase ksg1 (592 aa).

Positions 1 to 10 (MRNTHNPNET) are enriched in polar residues. The segment at 1–92 (MRNTHNPNET…NPSSGASTPN (92 aa)) is disordered. Residues 11–22 (EASEDAENDTQS) are compositionally biased toward acidic residues. Residues 27–37 (SFDHGSSEKLN) are compositionally biased toward basic and acidic residues. Positions 42–68 (PKTQNSAIPQSNALNTTPNESTSQIDS) are enriched in polar residues. Phosphoserine is present on residues Ser-64 and Ser-69. Over residues 80-92 (STPNPSSGASTPN) the composition is skewed to polar residues. The region spanning 99 to 366 (FKFGEILGEG…VDEIHQHPFF (268 aa)) is the Protein kinase domain. ATP-binding positions include 109–111 (SYS) and Lys-128. The PIF-pocket stretch occupies residues 130–175 (LDKRHIIKEKKEKYVNIEKEALCILSKHPGFIKLFYTFQDAHNLYF). Residues 178 to 180 (SLA) and Glu-184 contribute to the ATP site. The Proton acceptor role is filled by Asp-223. Positions 227 and 241 each coordinate ATP. A PH domain is found at 461–572 (ISKIGTLNVY…ELLDKASSIS (112 aa)).

The protein belongs to the protein kinase superfamily. AGC Ser/Thr protein kinase family. PDPK1 subfamily.

It is found in the cytoplasm. The catalysed reaction is L-seryl-[protein] + ATP = O-phospho-L-seryl-[protein] + ADP + H(+). The enzyme catalyses L-threonyl-[protein] + ATP = O-phospho-L-threonyl-[protein] + ADP + H(+). Functionally, involved in the control of sexual development and cell growth under stressed conditions. Phosphorylates AGC kinase gad8 at 'Thr-387', activating gad8 kinase activity and promoting sexual development. Phosphorylates AGC kinase psk1 at 'Ser-248', activating psk1 kinase activity and promoting phosphorylation of ribosomal protein S6. The sequence is that of Serine/threonine-protein kinase ksg1 from Schizosaccharomyces pombe (strain 972 / ATCC 24843) (Fission yeast).